The chain runs to 39 residues: Photosystem II reaction center protein I (39 aa).

A helical membrane pass occupies residues 6–26; that stretch reads ISVYSVVFFFIGIFMFGFLAS.

Belongs to the PsbI family. PSII is composed of 1 copy each of membrane proteins PsbA, PsbB, PsbC, PsbD, PsbE, PsbF, PsbH, PsbI, PsbJ, PsbK, PsbL, PsbM, PsbT, PsbX, PsbY, PsbZ, Psb30/Ycf12, peripheral proteins PsbO, CyanoQ (PsbQ), PsbU, PsbV and a large number of cofactors. It forms dimeric complexes.

The protein resides in the cellular thylakoid membrane. One of the components of the core complex of photosystem II (PSII), required for its stability and/or assembly. PSII is a light-driven water:plastoquinone oxidoreductase that uses light energy to abstract electrons from H(2)O, generating O(2) and a proton gradient subsequently used for ATP formation. It consists of a core antenna complex that captures photons, and an electron transfer chain that converts photonic excitation into a charge separation. This Synechococcus sp. (strain RCC307) protein is Photosystem II reaction center protein I.